The primary structure comprises 188 residues: Elongation factor P (188 aa).

It belongs to the elongation factor P family.

The protein localises to the cytoplasm. The protein operates within protein biosynthesis; polypeptide chain elongation. Its function is as follows. Involved in peptide bond synthesis. Stimulates efficient translation and peptide-bond synthesis on native or reconstituted 70S ribosomes in vitro. Probably functions indirectly by altering the affinity of the ribosome for aminoacyl-tRNA, thus increasing their reactivity as acceptors for peptidyl transferase. This is Elongation factor P from Bradyrhizobium sp. (strain BTAi1 / ATCC BAA-1182).